The sequence spans 327 residues: MPHLAELVAKAKAAVEGAQDIAALDLVRVEYLGKKGHLTLQMTSLRELPAEERPAAGAVINQAKQEIQEALNARKEKLESAVLNARLAAETIDVSLPGRRMENGGLHPVTRTIERIETFFGELGFSVESGPEIEDDYHNFDALNIPAHHPARADHDTFWFDATRLLRTQTSGVQIRTMQEQQPPIRIIVPGRVYRNDYDQTHTPMFHQMEGLIVDRDISFTNLKGTLHDFLRNFFEEDLQIRFRPSYFPFTEPSAEVDVMGKNGKWLEVLGCGMVHPNVLRNVGIDPEIYSGFAFGMGMERLTMLRYGVTDLRAFFENDLRFLKQFK.

Glu252 is a Mg(2+) binding site.

This sequence belongs to the class-II aminoacyl-tRNA synthetase family. Phe-tRNA synthetase alpha subunit type 1 subfamily. Tetramer of two alpha and two beta subunits. The cofactor is Mg(2+).

It is found in the cytoplasm. It catalyses the reaction tRNA(Phe) + L-phenylalanine + ATP = L-phenylalanyl-tRNA(Phe) + AMP + diphosphate + H(+). This Yersinia pestis bv. Antiqua (strain Antiqua) protein is Phenylalanine--tRNA ligase alpha subunit.